The chain runs to 340 residues: Protein LSM14 homolog car-1 (340 aa).

The Sm domain maps to 1–81; that stretch reads MSNQTPYIGS…IKDLIVCDTP (81 aa). Residues 101 to 125 show a composition bias toward low complexity; sequence SRSAPASDGAPAASAGSSRAGTPSR. Residues 101–148 are disordered; it reads SRSAPASDGAPAASAGSSRAGTPSRNSPLGQIIQNQRPGRGGYQQNFQ. Residues 126–148 show a composition bias toward polar residues; it reads NSPLGQIIQNQRPGRGGYQQNFQ. Residues 178 to 214 enclose the DFDF domain; sequence VNHREKLKFESDFDFEKANEKFQEVLVDNLEKLNIED. The FFD box motif lies at 227-243; sequence AFYDKKTSFFDNISCES. A TFG box motif is present at residues 251 to 271; that stretch reads TGRPDWKKERETNQETFGHNA. Residues 277 to 340 form a disordered region; it reads YRRGFGGRGR…QGNTAAAAEQ (64 aa). Gly residues predominate over residues 280 to 296; the sequence is GFGGRGRGGNRGYGGYN. Residues 312–325 show a composition bias toward low complexity; it reads GYRQNNGGYRRGGY.

It belongs to the LSM14 family.

It localises to the nucleus. Transcriptional regulator. Involved in modulating embryonic expression of ATP-dependent chaperone cdc-48.1. May play a role in mRNA gene silencing, and RNA granule (P-body) assembly. The polypeptide is Protein LSM14 homolog car-1 (Caenorhabditis elegans).